The sequence spans 360 residues: Phospho-N-acetylmuramoyl-pentapeptide-transferase (360 aa).

Helical transmembrane passes span 26–46, 72–92, 94–114, 132–152, 168–188, 199–219, 236–256, 263–283, 288–308, and 338–358; these read AIVS…RLIA, PTMG…LWAY, SNPY…VGFV, WKYF…YITG, VMPQ…VGTG, GLAI…AWAT, AGEL…FLWF, VFMG…IAVL, FLLV…ILQV, and VIVR…ATLK.

This sequence belongs to the glycosyltransferase 4 family. MraY subfamily. Mg(2+) is required as a cofactor.

The protein localises to the cell inner membrane. It catalyses the reaction UDP-N-acetyl-alpha-D-muramoyl-L-alanyl-gamma-D-glutamyl-meso-2,6-diaminopimeloyl-D-alanyl-D-alanine + di-trans,octa-cis-undecaprenyl phosphate = di-trans,octa-cis-undecaprenyl diphospho-N-acetyl-alpha-D-muramoyl-L-alanyl-D-glutamyl-meso-2,6-diaminopimeloyl-D-alanyl-D-alanine + UMP. It functions in the pathway cell wall biogenesis; peptidoglycan biosynthesis. Its function is as follows. Catalyzes the initial step of the lipid cycle reactions in the biosynthesis of the cell wall peptidoglycan: transfers peptidoglycan precursor phospho-MurNAc-pentapeptide from UDP-MurNAc-pentapeptide onto the lipid carrier undecaprenyl phosphate, yielding undecaprenyl-pyrophosphoryl-MurNAc-pentapeptide, known as lipid I. The sequence is that of Phospho-N-acetylmuramoyl-pentapeptide-transferase from Cronobacter sakazakii (strain ATCC BAA-894) (Enterobacter sakazakii).